The sequence spans 387 residues: Putative glutamate--cysteine ligase 2 (387 aa).

This sequence belongs to the glutamate--cysteine ligase type 2 family. YbdK subfamily.

It carries out the reaction L-cysteine + L-glutamate + ATP = gamma-L-glutamyl-L-cysteine + ADP + phosphate + H(+). ATP-dependent carboxylate-amine ligase which exhibits weak glutamate--cysteine ligase activity. In Pseudomonas fluorescens (strain ATCC BAA-477 / NRRL B-23932 / Pf-5), this protein is Putative glutamate--cysteine ligase 2.